The primary structure comprises 337 residues: Large ribosomal subunit protein uL3 (337 aa).

A disordered region spans residues 1–20 (MASIHRPKRGSLAFSPRKRA).

This sequence belongs to the universal ribosomal protein uL3 family. As to quaternary structure, part of the 50S ribosomal subunit. Forms a cluster with proteins L14 and L24e.

In terms of biological role, one of the primary rRNA binding proteins, it binds directly near the 3'-end of the 23S rRNA, where it nucleates assembly of the 50S subunit. This Methanosarcina barkeri (strain Fusaro / DSM 804) protein is Large ribosomal subunit protein uL3.